Reading from the N-terminus, the 456-residue chain is 3-isopropylmalate dehydratase large subunit (456 aa).

[4Fe-4S] cluster-binding residues include cysteine 336, cysteine 396, and cysteine 399.

The protein belongs to the aconitase/IPM isomerase family. LeuC type 1 subfamily. Heterodimer of LeuC and LeuD. [4Fe-4S] cluster serves as cofactor.

The enzyme catalyses (2R,3S)-3-isopropylmalate = (2S)-2-isopropylmalate. The protein operates within amino-acid biosynthesis; L-leucine biosynthesis; L-leucine from 3-methyl-2-oxobutanoate: step 2/4. Catalyzes the isomerization between 2-isopropylmalate and 3-isopropylmalate, via the formation of 2-isopropylmaleate. The protein is 3-isopropylmalate dehydratase large subunit of Staphylococcus epidermidis (strain ATCC 35984 / DSM 28319 / BCRC 17069 / CCUG 31568 / BM 3577 / RP62A).